The chain runs to 458 residues: Cobyrinate a,c-diamide synthase (458 aa).

Residues K254–S445 enclose the GATase cobBQ-type domain. Catalysis depends on C335, which acts as the Nucleophile.

Belongs to the CobB/CbiA family. Mg(2+) is required as a cofactor.

It carries out the reaction cob(II)yrinate + 2 L-glutamine + 2 ATP + 2 H2O = cob(II)yrinate a,c diamide + 2 L-glutamate + 2 ADP + 2 phosphate + 2 H(+). Its pathway is cofactor biosynthesis; adenosylcobalamin biosynthesis; cob(II)yrinate a,c-diamide from sirohydrochlorin (anaerobic route): step 10/10. Functionally, catalyzes the ATP-dependent amidation of the two carboxylate groups at positions a and c of cobyrinate, using either L-glutamine or ammonia as the nitrogen source. In Archaeoglobus fulgidus (strain ATCC 49558 / DSM 4304 / JCM 9628 / NBRC 100126 / VC-16), this protein is Cobyrinate a,c-diamide synthase.